The sequence spans 446 residues: Phosphoglucosamine mutase (446 aa).

The active-site Phosphoserine intermediate is the Ser-88. Mg(2+)-binding residues include Ser-88, Asp-231, Asp-233, and Asp-235. Residue Ser-88 is modified to Phosphoserine.

It belongs to the phosphohexose mutase family. Mg(2+) serves as cofactor. In terms of processing, activated by phosphorylation.

It carries out the reaction alpha-D-glucosamine 1-phosphate = D-glucosamine 6-phosphate. Functionally, catalyzes the conversion of glucosamine-6-phosphate to glucosamine-1-phosphate. This chain is Phosphoglucosamine mutase, found in Methanococcus vannielii (strain ATCC 35089 / DSM 1224 / JCM 13029 / OCM 148 / SB).